We begin with the raw amino-acid sequence, 336 residues long: Eukaryotic translation initiation factor 3 subunit I (336 aa).

5 WD repeats span residues 8–47 (GHER…RLGT), 50–91 (GHLG…KVWE), 146–185 (CTES…QLEN), 190–229 (EFDH…ILKT), and 287–326 (GHFG…FDFM).

Belongs to the eIF-3 subunit I family. As to quaternary structure, component of the eukaryotic translation initiation factor 3 (eIF-3) complex.

Its subcellular location is the cytoplasm. Functionally, component of the eukaryotic translation initiation factor 3 (eIF-3) complex, which is involved in protein synthesis of a specialized repertoire of mRNAs and, together with other initiation factors, stimulates binding of mRNA and methionyl-tRNAi to the 40S ribosome. The eIF-3 complex specifically targets and initiates translation of a subset of mRNAs involved in cell proliferation. The sequence is that of Eukaryotic translation initiation factor 3 subunit I (tif34) from Emericella nidulans (strain FGSC A4 / ATCC 38163 / CBS 112.46 / NRRL 194 / M139) (Aspergillus nidulans).